Reading from the N-terminus, the 1273-residue chain is DNA gyrase subunit A (1273 aa).

Positions 42-931 constitute a Topo IIA-type catalytic domain; that stretch reads LPEVRDGLKP…VDGDVNDEDL (890 aa). Catalysis depends on Y130, which acts as the O-(5'-phospho-DNA)-tyrosine intermediate. In terms of domain architecture, DOD-type homing endonuclease spans 256-396; the sequence is LFGAFISGGF…VQQMLLEFGV (141 aa). A GyrA-box motif is present at residues 958–964; that stretch reads QKRGGKG.

Belongs to the type II topoisomerase GyrA/ParC subunit family. As to quaternary structure, heterotetramer, composed of two GyrA and two GyrB chains. In the heterotetramer, GyrA contains the active site tyrosine that forms a transient covalent intermediate with the DNA, while GyrB binds cofactors catalyzes ATP hydrolysis. This protein undergoes a protein self splicing that involves a post-translational excision of the intervening region (intein) followed by peptide ligation.

It localises to the cytoplasm. The enzyme catalyses ATP-dependent breakage, passage and rejoining of double-stranded DNA.. Its activity is regulated as follows. DNA supercoiling is inhibited by fluoroquinolones; IC(50) 1 ug/ml for sitafloxacin. Functionally, a type II topoisomerase that negatively supercoils closed circular double-stranded (ds) DNA in an ATP-dependent manner to modulate DNA topology and maintain chromosomes in an underwound state. Negative supercoiling favors strand separation, and DNA replication, transcription, recombination and repair, all of which involve strand separation. Also able to catalyze the interconversion of other topological isomers of dsDNA rings, including catenanes and knotted rings. Type II topoisomerases break and join 2 DNA strands simultaneously in an ATP-dependent manner. This is DNA gyrase subunit A from Mycobacterium leprae (strain TN).